A 909-amino-acid polypeptide reads, in one-letter code: Yellow mounds protein A (909 aa).

Residues 7-283 enclose the MIF4G domain; the sequence is LNVVSRILNK…KNLFELKNNK (277 aa). Disordered stretches follow at residues 178-232, 415-439, 460-537, 627-689, and 704-774; these read SMGG…NNNI, MESSSNNNNSNSQLQFSLSSSSGIK, INLP…SSAP, VPPV…SEAR, and SLSG…AKKH. The span at 204 to 215 shows a compositional bias: acidic residues; the sequence is DDDDHDEEDNEN. Low complexity-rich tracts occupy residues 216-231 and 417-436; these read NYENTTSTTNNINNNN and SSSNNNNSNSQLQFSLSSSS. Positions 473–490 are enriched in polar residues; sequence RSNSPSLSSVVKQPQSQQ. The span at 491–525 shows a compositional bias: low complexity; sequence NNNNNNNNNNNNTTITTTTSSNNNINNNNNNNNNN. A compositionally biased stretch (polar residues) spans 721-738; sequence STPTLKSTPAIVQNGGSI. Positions 739-756 are enriched in low complexity; it reads TSTSSSSSSSSSSSSSTT. The stretch at 845 to 877 forms a coiled coil; that stretch reads TMLFDLEEMAQEQQNLEKQNDQQQNLLTQNNQI.

Plays as essential role in regulating terminal differentiation. The protein is Yellow mounds protein A (yelA) of Dictyostelium discoideum (Social amoeba).